The chain runs to 490 residues: Aspartyl/glutamyl-tRNA(Asn/Gln) amidotransferase subunit B (490 aa).

Belongs to the GatB/GatE family. GatB subfamily. Heterotrimer of A, B and C subunits.

The enzyme catalyses L-glutamyl-tRNA(Gln) + L-glutamine + ATP + H2O = L-glutaminyl-tRNA(Gln) + L-glutamate + ADP + phosphate + H(+). It catalyses the reaction L-aspartyl-tRNA(Asn) + L-glutamine + ATP + H2O = L-asparaginyl-tRNA(Asn) + L-glutamate + ADP + phosphate + 2 H(+). Its function is as follows. Allows the formation of correctly charged Asn-tRNA(Asn) or Gln-tRNA(Gln) through the transamidation of misacylated Asp-tRNA(Asn) or Glu-tRNA(Gln) in organisms which lack either or both of asparaginyl-tRNA or glutaminyl-tRNA synthetases. The reaction takes place in the presence of glutamine and ATP through an activated phospho-Asp-tRNA(Asn) or phospho-Glu-tRNA(Gln). In Prochlorococcus marinus subsp. pastoris (strain CCMP1986 / NIES-2087 / MED4), this protein is Aspartyl/glutamyl-tRNA(Asn/Gln) amidotransferase subunit B.